Reading from the N-terminus, the 1063-residue chain is Unconventional myosin-Ic (1063 aa).

Methionine 1 is subject to N-acetylmethionine. Threonine 10 carries the post-translational modification Phosphoserine. A Myosin motor domain is found at 47 to 731; the sequence is GVQDFVLLEN…TLFATEDSLE (685 aa). Residues asparagine 88, tyrosine 96, 139 to 148, and 192 to 196 each bind ATP; these read SGESGAGKTE and NDNSS. Lysine 383 is modified (N6-methyllysine). Serine 408 bears the Phosphoserine mark. Lysine 486 bears the N6-acetyllysine mark. Residue serine 536 is modified to Phosphoserine. The interval 608-630 is actin-binding; it reads LLQLVEILRSKEPAYIRCIKPND. IQ domains lie at 734–757 and 758–786; these read RQSL…FLRV and KRSA…AAQT. 2 positions are modified to phosphoserine: serine 864 and serine 1041. Residues 885–1059 form the TH1 domain; the sequence is KDNYPQSVPR…NGHLAVVAPR (175 aa).

Belongs to the TRAFAC class myosin-kinesin ATPase superfamily. Myosin family. In terms of assembly, interacts (via its IQ motifs) with CABP1 and CIB1; the interaction with CABP1 and CIB1 is calcium-dependent. Interacts (via tail domain) with PLEKHB1 (via PH domain); the interaction is not affected by the presence or absence of calcium and CALM. Interacts with POLR1A. Interacts with POLR2A. Component of the B-WICH complex, at least composed of SMARCA5/SNF2H, BAZ1B/WSTF, SF3B1, DEK, MYO1C, ERCC6, MYBBP1A and DDX21. Interacts (via its IQ motifs) with CALM; this precludes interaction with YWHAB. Interacts with YWHAB; this precludes interaction with CALM. Interacts with RPS6. Interacts with actin. Interacts with LLPH. Interacts with GLUT4. Interacts (via its IQ motifs) with SH3BGRL3; the interaction is dependent on calcium and takes place at membrane ruffles. In terms of processing, isoform 2 contains a N-acetylmethionine at position 1. In terms of tissue distribution, isoform 3 is expressed in small intestine, pancreas, brain, kidney, skin, heart muscle, testis, striated muscle, spleen, liver and lung (at protein level). Expressed in brain, testis, adrenal glands, thymus, spleen, kidney, lung, heart, cochlea and vestibule. Expressed in sensory hair cells of the inner ear. Expressed in adipocytes.

The protein localises to the cytoplasm. Its subcellular location is the nucleus. The protein resides in the cell cortex. It localises to the cell projection. It is found in the stereocilium membrane. The protein localises to the cytoplasmic vesicle. Its subcellular location is the ruffle membrane. The protein resides in the nucleolus. It localises to the nucleoplasm. Myosins are actin-based motor molecules with ATPase activity. Unconventional myosins serve in intracellular movements. Their highly divergent tails bind to membranous compartments, which then are moved relative to actin filaments. Involved in glucose transporter recycling in response to insulin by regulating movement of intracellular GLUT4-containing vesicles to the plasma membrane. Component of the hair cell's (the sensory cells of the inner ear) adaptation-motor complex. Acts as a mediator of adaptation of mechanoelectrical transduction in stereocilia of vestibular hair cells. Binds phosphoinositides and links the actin cytoskeleton to cellular membranes. Its function is as follows. Involved in regulation of transcription. Associated with transcriptional active ribosomal genes. Appears to cooperate with the WICH chromatin-remodeling complex to facilitate transcription. Necessary for the formation of the first phosphodiester bond during transcription initiation. This is Unconventional myosin-Ic (Myo1c) from Mus musculus (Mouse).